A 54-amino-acid polypeptide reads, in one-letter code: Small ribosomal subunit protein uS14 (54 aa).

Zn(2+) is bound by residues cysteine 19, cysteine 22, cysteine 37, and cysteine 40.

The protein belongs to the universal ribosomal protein uS14 family. Zinc-binding uS14 subfamily. In terms of assembly, part of the 30S ribosomal subunit. Requires Zn(2+) as cofactor.

Binds 16S rRNA, required for the assembly of 30S particles. The sequence is that of Small ribosomal subunit protein uS14 from Sulfolobus acidocaldarius (strain ATCC 33909 / DSM 639 / JCM 8929 / NBRC 15157 / NCIMB 11770).